A 396-amino-acid chain; its full sequence is Elongation factor Tu (396 aa).

The tr-type G domain occupies 11–205; that stretch reads KPHVNIGTIG…TVDEYIPTPE (195 aa). The tract at residues 20–27 is G1; that stretch reads GHVDHGKT. GTP is bound at residue 20-27; that stretch reads GHVDHGKT. Position 27 (Thr27) interacts with Mg(2+). The segment at 61–65 is G2; the sequence is GITIN. The G3 stretch occupies residues 82-85; that stretch reads DAPG. GTP-binding positions include 82-86 and 137-140; these read DAPGH and NKVD. The G4 stretch occupies residues 137 to 140; sequence NKVD. The G5 stretch occupies residues 175–177; it reads SAL.

The protein belongs to the TRAFAC class translation factor GTPase superfamily. Classic translation factor GTPase family. EF-Tu/EF-1A subfamily. Monomer.

It localises to the cytoplasm. The catalysed reaction is GTP + H2O = GDP + phosphate + H(+). Its function is as follows. GTP hydrolase that promotes the GTP-dependent binding of aminoacyl-tRNA to the A-site of ribosomes during protein biosynthesis. The polypeptide is Elongation factor Tu (Lactobacillus gasseri (strain ATCC 33323 / DSM 20243 / BCRC 14619 / CIP 102991 / JCM 1131 / KCTC 3163 / NCIMB 11718 / NCTC 13722 / AM63)).